Reading from the N-terminus, the 600-residue chain is Copine-A (600 aa).

C2 domains follow at residues 1–111 (MNLK…TVCL) and 116–246 (KSGK…NVIN). Residues aspartate 23, aspartate 29, aspartate 82, aspartate 84, aspartate 89, aspartate 151, aspartate 158, aspartate 215, aspartate 217, and aspartate 223 each coordinate Ca(2+). The VWFA domain occupies 286 to 503 (NLIVGIDCTA…ELAAEVLREI (218 aa)). Residues 535-549 (YDNPTTTTTATSPST) show a composition bias toward low complexity. The segment at 535-583 (YDNPTTTTTATSPSTGIDLNKGSNVGLNLTKTESSPSPSGGAGIDLNKG) is disordered. A compositionally biased stretch (polar residues) spans 555-572 (KGSNVGLNLTKTESSPSP).

It belongs to the copine family. Ca(2+) serves as cofactor.

It localises to the cytoplasm. The protein localises to the membrane. Functionally, required for cytokinesis, contractile vacuole function and development. The chain is Copine-A (cpnA) from Dictyostelium discoideum (Social amoeba).